The chain runs to 193 residues: Sarcoplasmic calcium-binding protein (193 aa).

3 EF-hand domains span residues 16-40 (MYDI…NTLI), 57-92 (IMSN…LCCG), and 101-136 (CFKT…RSAF). Residues Asp-18, Asp-20, Asn-22, Tyr-24, Asp-29, Asp-70, Asn-72, Asp-74, Gln-76, Glu-81, Asp-114, Asn-116, Asp-118, and Glu-125 each coordinate Ca(2+).

As to quaternary structure, monomer and dimer. As to expression, skeletal muscle (at protein level).

Its function is as follows. Like parvalbumins, SCPs seem to be more abundant in fast contracting muscles, but no functional relationship can be established from this distribution. The polypeptide is Sarcoplasmic calcium-binding protein (Scylla paramamosain (Mud crab)).